We begin with the raw amino-acid sequence, 161 residues long: MLNPRPCVPRLLSAVARCHKPYSTSIKSLEDLAKLKSLDDVDPDLVRKLINERTNELNSQAELAMLKQMQSQENQQQQQALKKFVRPMWIFLLMSSFFYLTGHYIWWKLEYDEREIELHKQVQALRQELDSAIAAKHSGKEPALSGAGAKKPKRWYLAWLW.

Residues 1–22 constitute a mitochondrion transit peptide; that stretch reads MLNPRPCVPRLLSAVARCHKPY. The Mitochondrial matrix segment spans residues 23–84; sequence STSIKSLEDL…QQQQQALKKF (62 aa). A helical membrane pass occupies residues 85–107; the sequence is VRPMWIFLLMSSFFYLTGHYIWW. Residues 108–161 lie on the Mitochondrial intermembrane side of the membrane; it reads KLEYDEREIELHKQVQALRQELDSAIAAKHSGKEPALSGAGAKKPKRWYLAWLW. The stretch at 109–138 forms a coiled coil; sequence LEYDEREIELHKQVQALRQELDSAIAAKHS.

It belongs to the INA17 family. In terms of assembly, component of the inner membrane assembly (INA) complex, composed of INA17 and INA22. Interacts with a subset of F(1)F(0)-ATP synthase subunits of the F(1)-domain and the peripheral stalk.

Its subcellular location is the mitochondrion inner membrane. Its function is as follows. Component of the INA complex (INAC) that promotes the biogenesis of mitochondrial F(1)F(0)-ATP synthase. INAC facilitates the assembly of the peripheral stalk and promotes the assembly of the catalytic F(1)-domain with the membrane-embedded F(0)-domain. The chain is Inner membrane assembly complex subunit 17 from Lachancea thermotolerans (strain ATCC 56472 / CBS 6340 / NRRL Y-8284) (Yeast).